The sequence spans 466 residues: 3-isopropylmalate dehydratase large subunit (466 aa).

Cysteine 347, cysteine 407, and cysteine 410 together coordinate [4Fe-4S] cluster.

This sequence belongs to the aconitase/IPM isomerase family. LeuC type 1 subfamily. As to quaternary structure, heterodimer of LeuC and LeuD. [4Fe-4S] cluster is required as a cofactor.

It carries out the reaction (2R,3S)-3-isopropylmalate = (2S)-2-isopropylmalate. It functions in the pathway amino-acid biosynthesis; L-leucine biosynthesis; L-leucine from 3-methyl-2-oxobutanoate: step 2/4. Functionally, catalyzes the isomerization between 2-isopropylmalate and 3-isopropylmalate, via the formation of 2-isopropylmaleate. The polypeptide is 3-isopropylmalate dehydratase large subunit (Acidiphilium cryptum (strain JF-5)).